Reading from the N-terminus, the 838-residue chain is Probable beta-glucosidase I (838 aa).

Asn-57 and Asn-197 each carry an N-linked (GlcNAc...) asparagine glycan. The active site involves Asp-225. Positions 395–555 (EGEKGFKFRV…GQEELISKAA (161 aa)) constitute a PA14 domain. Asn-493 carries an N-linked (GlcNAc...) asparagine glycan.

The protein belongs to the glycosyl hydrolase 3 family.

Its subcellular location is the secreted. The catalysed reaction is Hydrolysis of terminal, non-reducing beta-D-glucosyl residues with release of beta-D-glucose.. The protein operates within glycan metabolism; cellulose degradation. Functionally, beta-glucosidases are one of a number of cellulolytic enzymes involved in the degradation of cellulosic biomass. Catalyzes the last step releasing glucose from the inhibitory cellobiose. The sequence is that of Probable beta-glucosidase I (bglI) from Aspergillus clavatus (strain ATCC 1007 / CBS 513.65 / DSM 816 / NCTC 3887 / NRRL 1 / QM 1276 / 107).